A 558-amino-acid polypeptide reads, in one-letter code: SPATS2-like protein (558 aa).

A2 is subject to N-acetylalanine. Over residues 63-79 (GKKKNNKRKRSKSKQHQ) the composition is skewed to basic residues. 2 disordered regions span residues 63 to 148 (GKKK…RGIT) and 161 to 202 (DGNP…SNAP). 2 stretches are compositionally biased toward basic and acidic residues: residues 80 to 92 (GNKD…ERPE) and 110 to 142 (GCEK…EPPR). Position 120 is a phosphoserine (S120). A coiled-coil region spans residues 279-344 (KEEAMDILTA…ARFSCDIEQL (66 aa)). The segment at 383 to 514 (KQGNFSRKSS…SEKARRRQHA (132 aa)) is disordered. The segment covering 416-433 (DACQQTMPTNKQQNGPSN) has biased composition (polar residues). S455 is subject to Phosphoserine. The segment covering 469–485 (HEHRRQPHNGFRPKNKG) has biased composition (basic residues).

This sequence belongs to the SPATS2 family.

The protein resides in the cytoplasm. It localises to the nucleus. The protein localises to the nucleolus. The polypeptide is SPATS2-like protein (Spats2l) (Rattus norvegicus (Rat)).